The following is a 287-amino-acid chain: Phosphatidylserine decarboxylase proenzyme (287 aa).

Catalysis depends on charge relay system; for autoendoproteolytic cleavage activity residues Asp-89, His-146, and Ser-252. The active-site Schiff-base intermediate with substrate; via pyruvic acid; for decarboxylase activity is Ser-252. Ser-252 bears the Pyruvic acid (Ser); by autocatalysis mark.

It belongs to the phosphatidylserine decarboxylase family. PSD-B subfamily. Prokaryotic type I sub-subfamily. As to quaternary structure, heterodimer of a large membrane-associated beta subunit and a small pyruvoyl-containing alpha subunit. Pyruvate is required as a cofactor. Is synthesized initially as an inactive proenzyme. Formation of the active enzyme involves a self-maturation process in which the active site pyruvoyl group is generated from an internal serine residue via an autocatalytic post-translational modification. Two non-identical subunits are generated from the proenzyme in this reaction, and the pyruvate is formed at the N-terminus of the alpha chain, which is derived from the carboxyl end of the proenzyme. The autoendoproteolytic cleavage occurs by a canonical serine protease mechanism, in which the side chain hydroxyl group of the serine supplies its oxygen atom to form the C-terminus of the beta chain, while the remainder of the serine residue undergoes an oxidative deamination to produce ammonia and the pyruvoyl prosthetic group on the alpha chain. During this reaction, the Ser that is part of the protease active site of the proenzyme becomes the pyruvoyl prosthetic group, which constitutes an essential element of the active site of the mature decarboxylase.

Its subcellular location is the cell membrane. It catalyses the reaction a 1,2-diacyl-sn-glycero-3-phospho-L-serine + H(+) = a 1,2-diacyl-sn-glycero-3-phosphoethanolamine + CO2. It functions in the pathway phospholipid metabolism; phosphatidylethanolamine biosynthesis; phosphatidylethanolamine from CDP-diacylglycerol: step 2/2. Its function is as follows. Catalyzes the formation of phosphatidylethanolamine (PtdEtn) from phosphatidylserine (PtdSer). The protein is Phosphatidylserine decarboxylase proenzyme of Shewanella amazonensis (strain ATCC BAA-1098 / SB2B).